We begin with the raw amino-acid sequence, 31 residues long: Cytochrome b6-f complex subunit 6 (31 aa).

A helical transmembrane segment spans residues isoleucine 4–alanine 24.

The protein belongs to the PetL family. In terms of assembly, the 4 large subunits of the cytochrome b6-f complex are cytochrome b6, subunit IV (17 kDa polypeptide, PetD), cytochrome f and the Rieske protein, while the 4 small subunits are PetG, PetL, PetM and PetN. The complex functions as a dimer.

The protein localises to the plastid. It is found in the chloroplast thylakoid membrane. Functionally, component of the cytochrome b6-f complex, which mediates electron transfer between photosystem II (PSII) and photosystem I (PSI), cyclic electron flow around PSI, and state transitions. PetL is important for photoautotrophic growth as well as for electron transfer efficiency and stability of the cytochrome b6-f complex. The sequence is that of Cytochrome b6-f complex subunit 6 from Chaetosphaeridium globosum (Charophycean green alga).